A 1067-amino-acid chain; its full sequence is Lon protease homolog, mitochondrial (1067 aa).

The transit peptide at 1 to 36 (MITRLSGACLRRSGAKRNWPREHLVHRSLLASFSTT) directs the protein to the mitochondrion. A compositionally biased stretch (basic and acidic residues) spans 55-82 (KSKEPKDNKPLDNKNDPKKTHNEDESHT). Disordered stretches follow at residues 55 to 142 (KSKE…MPLN) and 262 to 314 (IPPK…ESTP). Over residues 128–139 (FELGGEENEDEM) the composition is skewed to acidic residues. Positions 162–425 (LLALPIARRP…KALYVLKKEL (264 aa)) constitute a Lon N-terminal domain. Over residues 293-311 (VKSDLKQDNGKEEPEKEVE) the composition is skewed to basic and acidic residues. 578–585 (GPPGVGKT) is an ATP binding site. The segment at 791 to 820 (NSKEKSTGKSGKKTSPQSSEDAANKEASSV) is disordered. Residues 854–1040 (TTPPGVVMGL…DDVFKRVFSN (187 aa)) enclose the Lon proteolytic domain. Active-site residues include serine 946 and lysine 989.

It belongs to the peptidase S16 family. As to quaternary structure, homohexamer or homoheptamer. Organized in a ring with a central cavity.

The protein localises to the mitochondrion matrix. The catalysed reaction is Hydrolysis of proteins in presence of ATP.. Its function is as follows. ATP-dependent serine protease that mediates the selective degradation of misfolded, unassembled or oxidatively damaged polypeptides as well as certain short-lived regulatory proteins in the mitochondrial matrix. May also have a chaperone function in the assembly of inner membrane protein complexes. Participates in the regulation of mitochondrial gene expression and in the maintenance of the integrity of the mitochondrial genome. Binds to mitochondrial DNA in a site-specific manner. This chain is Lon protease homolog, mitochondrial (pim1), found in Schizosaccharomyces pombe (strain 972 / ATCC 24843) (Fission yeast).